Here is a 124-residue protein sequence, read N- to C-terminus: Small ribosomal subunit protein uS12c (124 aa).

This sequence belongs to the universal ribosomal protein uS12 family. In terms of assembly, part of the 30S ribosomal subunit.

Its subcellular location is the plastid. It localises to the chloroplast. With S4 and S5 plays an important role in translational accuracy. Located at the interface of the 30S and 50S subunits. The chain is Small ribosomal subunit protein uS12c (rps12) from Ostreococcus tauri.